Reading from the N-terminus, the 98-residue chain is Protein FAM24A (98 aa).

A signal peptide spans 1 to 29; the sequence is MFDLRTKVMIGIASTLLIAAIMLITLVFC.

Belongs to the FAM24 family.

It localises to the secreted. The polypeptide is Protein FAM24A (Fam24a) (Mus musculus (Mouse)).